A 502-amino-acid chain; its full sequence is Membrane-bound lytic murein transglycosylase F (502 aa).

The first 33 residues, 1-33 (MSRFISTFRSSSAQLSIVLAVILATGCSQPTTL), serve as a signal peptide directing secretion. The segment at 34 to 264 (QEIREEGVLH…QLAERFYGHL (231 aa)) is non-LT domain. The tract at residues 265–502 (DRLNYVGART…PELRLIPPTL (238 aa)) is LT domain. The active site involves glutamate 311. The tract at residues 457-502 (PSASGLEDQLAWLGDNEAGPEAPAKESQPDLRADLPPELRLIPPTL) is disordered. The span at 479 to 493 (PAKESQPDLRADLPP) shows a compositional bias: basic and acidic residues.

This sequence in the N-terminal section; belongs to the bacterial solute-binding protein 3 family. In the C-terminal section; belongs to the transglycosylase Slt family.

It localises to the cell outer membrane. The enzyme catalyses Exolytic cleavage of the (1-&gt;4)-beta-glycosidic linkage between N-acetylmuramic acid (MurNAc) and N-acetylglucosamine (GlcNAc) residues in peptidoglycan, from either the reducing or the non-reducing ends of the peptidoglycan chains, with concomitant formation of a 1,6-anhydrobond in the MurNAc residue.. In terms of biological role, murein-degrading enzyme that degrades murein glycan strands and insoluble, high-molecular weight murein sacculi, with the concomitant formation of a 1,6-anhydromuramoyl product. Lytic transglycosylases (LTs) play an integral role in the metabolism of the peptidoglycan (PG) sacculus. Their lytic action creates space within the PG sacculus to allow for its expansion as well as for the insertion of various structures such as secretion systems and flagella. This chain is Membrane-bound lytic murein transglycosylase F, found in Marinobacter nauticus (strain ATCC 700491 / DSM 11845 / VT8) (Marinobacter aquaeolei).